Consider the following 199-residue polypeptide: Chromophore lyase CpcT/CpeT 2 (199 aa).

Belongs to the CpcT/CpeT biliprotein lyase family.

Functionally, covalently attaches a chromophore to Cys residue(s) of phycobiliproteins. This chain is Chromophore lyase CpcT/CpeT 2, found in Synechococcus sp. (strain JA-3-3Ab) (Cyanobacteria bacterium Yellowstone A-Prime).